Here is a 174-residue protein sequence, read N- to C-terminus: Imidazole glycerol phosphate synthase subunit HisH (174 aa).

Positions 2-174 constitute a Glutamine amidotransferase type-1 domain; it reads SVVIINTGCA…AAVNKDNFWR (173 aa). The Nucleophile role is filled by Cys77.

Heterodimer of HisH and HisF.

The protein resides in the cytoplasm. It carries out the reaction 5-[(5-phospho-1-deoxy-D-ribulos-1-ylimino)methylamino]-1-(5-phospho-beta-D-ribosyl)imidazole-4-carboxamide + L-glutamine = D-erythro-1-(imidazol-4-yl)glycerol 3-phosphate + 5-amino-1-(5-phospho-beta-D-ribosyl)imidazole-4-carboxamide + L-glutamate + H(+). The enzyme catalyses L-glutamine + H2O = L-glutamate + NH4(+). Its pathway is amino-acid biosynthesis; L-histidine biosynthesis; L-histidine from 5-phospho-alpha-D-ribose 1-diphosphate: step 5/9. IGPS catalyzes the conversion of PRFAR and glutamine to IGP, AICAR and glutamate. The HisH subunit catalyzes the hydrolysis of glutamine to glutamate and ammonia as part of the synthesis of IGP and AICAR. The resulting ammonia molecule is channeled to the active site of HisF. This is Imidazole glycerol phosphate synthase subunit HisH (hisH) from Buchnera aphidicola subsp. Schlechtendalia chinensis.